The sequence spans 64 residues: MNIRPGNFDEIDRSVFDRFPKRNIDEIDTAFDSFFKRNIDEIDRVGWNGFVKRLNNYLADRQRR.

2 consecutive propeptides follow at residues 1-6 (MNIRPG) and 23-24 (NI).

Belongs to the orcokinin family. In terms of tissue distribution, orcokinin-3 is expressed throughout the central nervous system (at protein level).

The protein resides in the secreted. Its function is as follows. Myotropic peptides. In Camponotus floridanus (Florida carpenter ant), this protein is Orcokinin peptides.